The chain runs to 901 residues: HTH-type transcriptional regulator MalT (901 aa).

Residue 39 to 46 participates in ATP binding; the sequence is SPAGYGKT. In terms of domain architecture, HTH luxR-type spans 829 to 894; the sequence is ELIRTSPLTQ…AAVQHAQKLL (66 aa). Residues 853-872 constitute a DNA-binding region (H-T-H motif); that stretch reads NEQIAGELEVAATTIKTHIR.

It belongs to the MalT family. Monomer in solution. Oligomerizes to an active state in the presence of the positive effectors ATP and maltotriose.

Its activity is regulated as follows. Activated by ATP and maltotriose, which are both required for DNA binding. Functionally, positively regulates the transcription of the maltose regulon whose gene products are responsible for uptake and catabolism of malto-oligosaccharides. Specifically binds to the promoter region of its target genes, recognizing a short DNA motif called the MalT box. The sequence is that of HTH-type transcriptional regulator MalT from Escherichia coli O127:H6 (strain E2348/69 / EPEC).